The chain runs to 224 residues: 2,5-diamino-6-ribosylamino-4(3H)-pyrimidinone 5'-phosphate reductase (224 aa).

NADP(+) contacts are provided by residues G16, T57, D61, 83–86 (SKLR), V134, and 156–159 (GGTL).

Belongs to the HTP reductase family. In terms of assembly, homodimer.

It carries out the reaction 2,5-diamino-6-(1-D-ribitylamino)pyrimidin-4(3H)-one 5'-phosphate + NADP(+) = 2,5-diamino-6-(1-D-ribosylamino)pyrimidin-4(3H)-one 5'-phosphate + NADPH + H(+). The catalysed reaction is 2,5-diamino-6-(1-D-ribitylamino)pyrimidin-4(3H)-one 5'-phosphate + NAD(+) = 2,5-diamino-6-(1-D-ribosylamino)pyrimidin-4(3H)-one 5'-phosphate + NADH + H(+). The protein operates within cofactor biosynthesis; riboflavin biosynthesis. In terms of biological role, catalyzes an early step in riboflavin biosynthesis, the NAD(P)H-dependent reduction of the ribose side chain of 2,5-diamino-6-ribosylamino-4(3H)-pyrimidinone 5'-phosphate, yielding 2,5-diamino-6-ribitylamino-4(3H)-pyrimidinone 5'-phosphate. The beta anomer is the authentic substrate, and the alpha anomer can serve as substrate subsequent to spontaneous anomerization. NADPH and NADH function equally well as the reductants. Does not catalyze the reduction of 5-amino-6-(5-phospho-D-ribosylamino)uracil to 5-amino-6-(5-phospho-D-ribitylamino)uracil. The protein is 2,5-diamino-6-ribosylamino-4(3H)-pyrimidinone 5'-phosphate reductase (arfC) of Methanocaldococcus jannaschii (strain ATCC 43067 / DSM 2661 / JAL-1 / JCM 10045 / NBRC 100440) (Methanococcus jannaschii).